We begin with the raw amino-acid sequence, 361 residues long: Allatostatin-A receptor (361 aa).

Over 1–46 (MESTEDEFYTICLNLTAEDPSFGNCNYTTDFENGELLEKVVSRVVP) the chain is Extracellular. 2 N-linked (GlcNAc...) asparagine glycosylation sites follow: Asn-14 and Asn-26. Residues 47–67 (IFFGFIGIVGLVGNALVVLVV) traverse the membrane as a helical segment. The Cytoplasmic portion of the chain corresponds to 68-78 (AANPGMRSTTN). The helical transmembrane segment at 79–99 (LLIINLAVADLLFVIFCVPFT) threads the bilayer. Over 100 to 116 (ATDYVMPRWPFGDWWCK) the chain is Extracellular. Cys-115 and Cys-196 are oxidised to a cystine. Residues 117-137 (VVQYFIVVTAHASVYTLVLMS) form a helical membrane-spanning segment. The Cytoplasmic portion of the chain corresponds to 138 to 158 (LDRFMAVVHPIASMSIRTEKN). A helical membrane pass occupies residues 159–179 (ALLAIACIWVVILTTAIPVGI). Topologically, residues 180–212 (CHGEREYSYFNRNHSSCVFLEERGYSKLGFQMS) are extracellular. Asn-192 carries an N-linked (GlcNAc...) asparagine glycan. The helical transmembrane segment at 213–233 (FFLSSYVIPLALISVLYMCML) threads the bilayer. Residues 234–259 (TRLWKSAPGGRVSAESRRGRKKVTRM) are Cytoplasmic-facing. A helical transmembrane segment spans residues 260-280 (VVVVVVVFAVCWCPIQIILLV). The Extracellular segment spans residues 281–296 (KALNKYHITYFTVTAQ). A helical transmembrane segment spans residues 297–317 (IVSHVLAYMNSCVNPVLYAFL). Residues 318–361 (SENFRVAFRKVMYCPPPYNDGFSGRPQATKTTRTGNGNSCHDIV) are Cytoplasmic-facing. Positions 341-361 (GRPQATKTTRTGNGNSCHDIV) are disordered. The span at 343–361 (PQATKTTRTGNGNSCHDIV) shows a compositional bias: polar residues.

The protein belongs to the G-protein coupled receptor 1 family. Expressed in the midgut and, to a lesser extent, in the fore- and hindgut of fifth instar larvae. Also highly expressed in the brain of fourth and fifth instar larvae.

Its subcellular location is the cell membrane. Functionally, acts as a receptor for A-type allatostatin neuropeptide hormones. The polypeptide is Allatostatin-A receptor (Bombyx mori (Silk moth)).